The sequence spans 342 residues: MNTSDFDFNLPEALIAQTPLKKRDSSKLLVVDHQKKTMKDTHFDHIIDELNSGDALVMNDTRVLPARLHGEKTVTHGHVELLLLKNIQGDQWEVLAKPAKRLKVGSHISFGDGRLKAIIKEELDHGGRIVEFSYEGIFLEVLESLGEMPLPPYIHEKLEDRDRYQTVYAKENGSAAAPTAGLHFTEELLSKIEAKGVKLVYLTLHVGLGTFRPVSVDNVEEHQMHSEFYSLSPEAAQTLKDVKANGGRIVAVGTTSIRTLETIGNKFAGQIEADSGWTNIFIKPGYQFKIVDAFSTNFHLPKSTLVMLVSAFAGRDFILDAYKHAVDKHYRFFSFGDAMFVK.

This sequence belongs to the QueA family. In terms of assembly, monomer.

The protein resides in the cytoplasm. It catalyses the reaction 7-aminomethyl-7-carbaguanosine(34) in tRNA + S-adenosyl-L-methionine = epoxyqueuosine(34) in tRNA + adenine + L-methionine + 2 H(+). The protein operates within tRNA modification; tRNA-queuosine biosynthesis. Its function is as follows. Transfers and isomerizes the ribose moiety from AdoMet to the 7-aminomethyl group of 7-deazaguanine (preQ1-tRNA) to give epoxyqueuosine (oQ-tRNA). This chain is S-adenosylmethionine:tRNA ribosyltransferase-isomerase, found in Streptococcus mutans serotype c (strain ATCC 700610 / UA159).